The following is a 355-amino-acid chain: NADH dehydrogenase [ubiquinone] 1 alpha subcomplex subunit 10, mitochondrial (355 aa).

A mitochondrion-targeting transit peptide spans 1-35 (MALRLLRLVPASASARGLAAGAQRVGRIHTSVHCK). Lys-122 carries the N6-acetyllysine; alternate modification. Lys-122 bears the N6-succinyllysine; alternate mark. Ser-250 bears the Phosphoserine; by PINK1 mark. Lys-285 carries the post-translational modification N6-succinyllysine.

Belongs to the complex I NDUFA10 subunit family. As to quaternary structure, complex I is composed of 45 different subunits. This a component of the hydrophobic protein fraction. FAD serves as cofactor. In terms of processing, phosphorylation at Ser-250 by PINK1 is required for the binding and/or reduction of the complex I substrate ubiquinone. As to expression, expressed in the head and flagellum of epididymal sperm but not in testicular sperm (at protein level).

The protein resides in the mitochondrion matrix. Its function is as follows. Accessory subunit of the mitochondrial membrane respiratory chain NADH dehydrogenase (Complex I), that is believed not to be involved in catalysis. Complex I functions in the transfer of electrons from NADH to the respiratory chain. The immediate electron acceptor for the enzyme is believed to be ubiquinone. In Rattus norvegicus (Rat), this protein is NADH dehydrogenase [ubiquinone] 1 alpha subcomplex subunit 10, mitochondrial (Ndufa10).